The primary structure comprises 301 residues: NAD kinase 2 (301 aa).

The active-site Proton acceptor is the Asp77. NAD(+) is bound by residues 77–78, Arg82, 151–152, Arg162, Asp181, and 192–197; these read DG, NE, and TAYAFS.

The protein belongs to the NAD kinase family. A divalent metal cation serves as cofactor.

The protein localises to the cytoplasm. The enzyme catalyses NAD(+) + ATP = ADP + NADP(+) + H(+). Its function is as follows. Involved in the regulation of the intracellular balance of NAD and NADP, and is a key enzyme in the biosynthesis of NADP. Catalyzes specifically the phosphorylation on 2'-hydroxyl of the adenosine moiety of NAD to yield NADP. The polypeptide is NAD kinase 2 (Streptomyces avermitilis (strain ATCC 31267 / DSM 46492 / JCM 5070 / NBRC 14893 / NCIMB 12804 / NRRL 8165 / MA-4680)).